A 145-amino-acid chain; its full sequence is D-aminoacyl-tRNA deacylase (145 aa).

Positions 137–138 match the Gly-cisPro motif, important for rejection of L-amino acids motif; that stretch reads GP.

It belongs to the DTD family. Homodimer.

The protein resides in the cytoplasm. The enzyme catalyses glycyl-tRNA(Ala) + H2O = tRNA(Ala) + glycine + H(+). It carries out the reaction a D-aminoacyl-tRNA + H2O = a tRNA + a D-alpha-amino acid + H(+). An aminoacyl-tRNA editing enzyme that deacylates mischarged D-aminoacyl-tRNAs. Also deacylates mischarged glycyl-tRNA(Ala), protecting cells against glycine mischarging by AlaRS. Acts via tRNA-based rather than protein-based catalysis; rejects L-amino acids rather than detecting D-amino acids in the active site. By recycling D-aminoacyl-tRNA to D-amino acids and free tRNA molecules, this enzyme counteracts the toxicity associated with the formation of D-aminoacyl-tRNA entities in vivo and helps enforce protein L-homochirality. The sequence is that of D-aminoacyl-tRNA deacylase from Salmonella typhi.